Consider the following 247-residue polypeptide: V-type proton ATPase subunit D (247 aa).

This sequence belongs to the V-ATPase D subunit family. V-ATPase is a heteromultimeric enzyme made up of two complexes: the ATP-hydrolytic V1 complex and the proton translocation V0 complex. The V1 complex consists of three catalytic AB heterodimers that form a heterohexamer, three peripheral stalks each consisting of EG heterodimers, one central rotor including subunits D and F, and the regulatory subunits C and H. The proton translocation complex V0 consists of the proton transport subunit a, a ring of proteolipid subunits c9c'', rotary subunit d, subunits e and f, and the accessory subunits ATP6AP1/Ac45 and ATP6AP2/PRR. Interacts with SNX10. Expressed in brain (at protein level). Present in tissues active in secretion. Amounts elevated in brain, kidney and testis.

The protein localises to the membrane. The protein resides in the cytoplasmic vesicle. It localises to the clathrin-coated vesicle membrane. Its subcellular location is the cytoplasm. It is found in the cytoskeleton. The protein localises to the microtubule organizing center. The protein resides in the centrosome. It localises to the cell projection. Its subcellular location is the cilium. Subunit of the V1 complex of vacuolar(H+)-ATPase (V-ATPase), a multisubunit enzyme composed of a peripheral complex (V1) that hydrolyzes ATP and a membrane integral complex (V0) that translocates protons. V-ATPase is responsible for acidifying and maintaining the pH of intracellular compartments and in some cell types, is targeted to the plasma membrane, where it is responsible for acidifying the extracellular environment. May play a role in cilium biogenesis through regulation of the transport and the localization of proteins to the cilium. In Bos taurus (Bovine), this protein is V-type proton ATPase subunit D (ATP6V1D).